The primary structure comprises 416 residues: E3 ubiquitin-protein ligase DMA1 (416 aa).

Positions 1 to 30 are disordered; that stretch reads MSTNTVPSSPPNQTPPAASGIATSHDHTKF. Glycyl lysine isopeptide (Lys-Gly) (interchain with G-Cter in ubiquitin) cross-links involve residues K150, K204, K217, K237, K240, K260, K300, K306, K313, and K317. Residues 189-252 form the FHA domain; the sequence is IIIGRYTERV…SGTFLNHQRL (64 aa). Residues 327-371 form an RING-type zinc finger; that stretch reads CSICLNKIKPCQAIFISPCAHSWHFHCVRRLVIMNYPQFMCPNCR.

It belongs to the DMA1 family. In terms of assembly, interacts with CDC123. Interacts with PCL1. UBC4-dependent autoubiquitination occurs at Lys-150, Lys-204, Lys-217, Lys-237, Lys-240, Lys-260, Lys-300, Lys-306, Lys-313 and Lys-317. UBC4-dependent autoubiquitination is responsible for DMA2 turnover. UBC13/MMS2-dependent autoubiquitination occurs at Lys-237 and Lys-306. Lys-204 and Lys-306 are also ubiquitinated in trans by DMA2 E3 ligase in association with UBC4.

It localises to the cytoplasm. The catalysed reaction is S-ubiquitinyl-[E2 ubiquitin-conjugating enzyme]-L-cysteine + [acceptor protein]-L-lysine = [E2 ubiquitin-conjugating enzyme]-L-cysteine + N(6)-ubiquitinyl-[acceptor protein]-L-lysine.. E3 ubiquitin-protein ligase which functions in cell cycle retarding in conjunction with the UBC4 and UBC13/MMS2 complex, 2 E2 ubiquitin conjugating enzymes. Involved in nutritional control of the cell cycle. Targets the G1 cyclin PCL1 for destruction. Required for proper spindle positioning, likely regulating septin ring deposition at the bud neck. The polypeptide is E3 ubiquitin-protein ligase DMA1 (Saccharomyces cerevisiae (strain ATCC 204508 / S288c) (Baker's yeast)).